A 612-amino-acid polypeptide reads, in one-letter code: Elongation factor 4 (612 aa).

Positions 12–194 (SRIRNFSIIA…QIVEKVPAPS (183 aa)) constitute a tr-type G domain. GTP is bound by residues 24–29 (DHGKST) and 141–144 (NKID).

It belongs to the TRAFAC class translation factor GTPase superfamily. Classic translation factor GTPase family. LepA subfamily.

The protein resides in the cell membrane. It catalyses the reaction GTP + H2O = GDP + phosphate + H(+). Functionally, required for accurate and efficient protein synthesis under certain stress conditions. May act as a fidelity factor of the translation reaction, by catalyzing a one-codon backward translocation of tRNAs on improperly translocated ribosomes. Back-translocation proceeds from a post-translocation (POST) complex to a pre-translocation (PRE) complex, thus giving elongation factor G a second chance to translocate the tRNAs correctly. Binds to ribosomes in a GTP-dependent manner. The protein is Elongation factor 4 of Bacillus licheniformis (strain ATCC 14580 / DSM 13 / JCM 2505 / CCUG 7422 / NBRC 12200 / NCIMB 9375 / NCTC 10341 / NRRL NRS-1264 / Gibson 46).